The sequence spans 398 residues: NADH-quinone oxidoreductase subunit D (398 aa).

This sequence belongs to the complex I 49 kDa subunit family. As to quaternary structure, NDH-1 is composed of 14 different subunits. Subunits NuoB, C, D, E, F, and G constitute the peripheral sector of the complex.

It is found in the cell inner membrane. The enzyme catalyses a quinone + NADH + 5 H(+)(in) = a quinol + NAD(+) + 4 H(+)(out). NDH-1 shuttles electrons from NADH, via FMN and iron-sulfur (Fe-S) centers, to quinones in the respiratory chain. The immediate electron acceptor for the enzyme in this species is believed to be ubiquinone. Couples the redox reaction to proton translocation (for every two electrons transferred, four hydrogen ions are translocated across the cytoplasmic membrane), and thus conserves the redox energy in a proton gradient. In Bradyrhizobium sp. (strain ORS 278), this protein is NADH-quinone oxidoreductase subunit D.